Consider the following 101-residue polypeptide: Small ribosomal subunit protein uS14m (101 aa).

Belongs to the universal ribosomal protein uS14 family. As to quaternary structure, component of the mitochondrial ribosome small subunit (28S) which comprises a 12S rRNA and about 30 distinct proteins. Interacts with LIAT1.

It localises to the mitochondrion. This chain is Small ribosomal subunit protein uS14m (mrps14), found in Dictyostelium citrinum (Slime mold).